A 518-amino-acid chain; its full sequence is Serine--tRNA ligase, mitochondrial (518 aa).

A mitochondrion-targeting transit peptide spans 1–34; it reads MAASMARLWWPFLARQGLRSRGRCVCSQNPRRSF. N6-acetyllysine is present on Lys-110. Lys-195 carries the N6-succinyllysine modification. An L-serine-binding site is contributed by 299-301; sequence TAE. Position 330–332 (330–332) interacts with ATP; it reads RAE. The residue at position 337 (Lys-337) is an N6-succinyllysine. ATP is bound at residue Val-345. Residue Glu-352 participates in L-serine binding. Position 418–421 (418–421) interacts with ATP; it reads EVTS. Thr-453 contributes to the L-serine binding site. Residues 497-518 form a disordered region; the sequence is PLQYIGPNQPQKPRLPGQSATR.

Belongs to the class-II aminoacyl-tRNA synthetase family. Type-1 seryl-tRNA synthetase subfamily. In terms of assembly, homodimer. The tRNA molecule probably binds across the dimer. As to expression, ubiquitous.

The protein localises to the mitochondrion matrix. The enzyme catalyses tRNA(Ser) + L-serine + ATP = L-seryl-tRNA(Ser) + AMP + diphosphate + H(+). It catalyses the reaction tRNA(Sec) + L-serine + ATP = L-seryl-tRNA(Sec) + AMP + diphosphate + H(+). The protein operates within aminoacyl-tRNA biosynthesis; selenocysteinyl-tRNA(Sec) biosynthesis; L-seryl-tRNA(Sec) from L-serine and tRNA(Sec): step 1/1. Functionally, catalyzes the attachment of serine to tRNA(Ser). Is also probably able to aminoacylate tRNA(Sec) with serine, to form the misacylated tRNA L-seryl-tRNA(Sec), which will be further converted into selenocysteinyl-tRNA(Sec). This Mus musculus (Mouse) protein is Serine--tRNA ligase, mitochondrial (Sars2).